An 84-amino-acid polypeptide reads, in one-letter code: Exodeoxyribonuclease 7 small subunit (84 aa).

Belongs to the XseB family. Heterooligomer composed of large and small subunits.

Its subcellular location is the cytoplasm. The enzyme catalyses Exonucleolytic cleavage in either 5'- to 3'- or 3'- to 5'-direction to yield nucleoside 5'-phosphates.. Bidirectionally degrades single-stranded DNA into large acid-insoluble oligonucleotides, which are then degraded further into small acid-soluble oligonucleotides. This Herminiimonas arsenicoxydans protein is Exodeoxyribonuclease 7 small subunit.